The chain runs to 430 residues: Adenylosuccinate synthetase (430 aa).

GTP is bound by residues G12 to K18 and G40 to T42. D13 (proton acceptor) is an active-site residue. Mg(2+) contacts are provided by D13 and G40. Residues D13–K16, N38–H41, T130, R144, Q224, T239, and R303 contribute to the IMP site. The Proton donor role is filled by H41. V299–R305 is a substrate binding site. GTP is bound by residues R305, K331–D333, and S413–S415.

This sequence belongs to the adenylosuccinate synthetase family. Homodimer. Requires Mg(2+) as cofactor.

The protein resides in the cytoplasm. It catalyses the reaction IMP + L-aspartate + GTP = N(6)-(1,2-dicarboxyethyl)-AMP + GDP + phosphate + 2 H(+). Its pathway is purine metabolism; AMP biosynthesis via de novo pathway; AMP from IMP: step 1/2. In terms of biological role, plays an important role in the de novo pathway of purine nucleotide biosynthesis. Catalyzes the first committed step in the biosynthesis of AMP from IMP. This Rhodopseudomonas palustris (strain BisB18) protein is Adenylosuccinate synthetase.